Consider the following 599-residue polypeptide: Elongation factor 4 (599 aa).

Positions 4 to 186 (ENIRNFSIIA…EIVTKIPPPQ (183 aa)) constitute a tr-type G domain. GTP contacts are provided by residues 16-21 (DHGKST) and 133-136 (NKID).

This sequence belongs to the TRAFAC class translation factor GTPase superfamily. Classic translation factor GTPase family. LepA subfamily.

It is found in the cell inner membrane. The enzyme catalyses GTP + H2O = GDP + phosphate + H(+). In terms of biological role, required for accurate and efficient protein synthesis under certain stress conditions. May act as a fidelity factor of the translation reaction, by catalyzing a one-codon backward translocation of tRNAs on improperly translocated ribosomes. Back-translocation proceeds from a post-translocation (POST) complex to a pre-translocation (PRE) complex, thus giving elongation factor G a second chance to translocate the tRNAs correctly. Binds to ribosomes in a GTP-dependent manner. The sequence is that of Elongation factor 4 from Geotalea uraniireducens (strain Rf4) (Geobacter uraniireducens).